A 745-amino-acid polypeptide reads, in one-letter code: 1,4-alpha-glucan branching enzyme GlgB (745 aa).

D416 acts as the Nucleophile in catalysis. The active-site Proton donor is E469.

It belongs to the glycosyl hydrolase 13 family. GlgB subfamily. In terms of assembly, monomer.

The catalysed reaction is Transfers a segment of a (1-&gt;4)-alpha-D-glucan chain to a primary hydroxy group in a similar glucan chain.. Its pathway is glycan biosynthesis; glycogen biosynthesis. Its function is as follows. Catalyzes the formation of the alpha-1,6-glucosidic linkages in glycogen by scission of a 1,4-alpha-linked oligosaccharide from growing alpha-1,4-glucan chains and the subsequent attachment of the oligosaccharide to the alpha-1,6 position. In Shewanella sp. (strain W3-18-1), this protein is 1,4-alpha-glucan branching enzyme GlgB.